Reading from the N-terminus, the 400-residue chain is MLARRKPVLPALTINPTIAEGPSPTSEGASEANLVDLQKKLEELELDEQQKKRLEAFLTQKAKVGELKDDDFERISELGAGNGGVVTKVQHRPSGLIMARKLIHLEIKPAIRNQIIRELQVLHECNSPYIVGFYGAFYSDGEISICMEHMDGGSLDQVLKEAKRIPEEILGKVSIAVLRGLAYLREKHQIMHRDVKPSNILVNSRGEIKLCDFGVSGQLIDSMANSFVGTRSYMAPERLQGTHYSVQSDIWSMGLSLVELAVGRYPIPPPDAKELEAIFGRPVVDGEEGEPHSISPRPRPPGRPVSGHGMDSRPAMAIFELLDYIVNEPPPKLPNGVFTPDFQEFVNKCLIKNPAERADLKMLTNHTFIKRSEVEEVDFAGWLCKTLRLNQPGTPTRTAV.

N-acetylmethionine is present on M1. At S23 the chain carries Phosphoserine. The 298-residue stretch at 72–369 (FERISELGAG…LKMLTNHTFI (298 aa)) folds into the Protein kinase domain. ATP is bound by residues 78-86 (LGAGNGGVV) and K101. The Proton acceptor role is filled by D194. Residues S222 and S226 each carry the (Microbial infection) O-acetylserine; by Yersinia YopJ; alternate modification. Residue S222 is modified to Phosphoserine; by RAF; alternate. Residue S226 is modified to Phosphoserine; alternate. Positions 286–310 (GEEGEPHSISPRPRPPGRPVSGHGM) are disordered. A phosphoserine mark is found at S293, S295, and S306. A phosphothreonine mark is found at T394 and T396.

It belongs to the protein kinase superfamily. STE Ser/Thr protein kinase family. MAP kinase kinase subfamily. As to quaternary structure, interacts with MORG1. Interacts with SGK1. Interacts with KSR1. Interacts with KSR1 and BRAF; the interaction with KSR1 mediates KSR1-BRAF dimerization. Interacts with GLS. Mg(2+) is required as a cofactor. In terms of processing, MAPKK is itself dependent on Ser/Thr phosphorylation for activity catalyzed by MAP kinase kinase kinases (RAF or MEKK1). Phosphorylated by MAP2K1/MEK1. (Microbial infection) Acetylation of Ser-222 and Ser-226 by Yersinia YopJ prevents phosphorylation and activation, thus blocking the MAPK signaling pathway.

The protein localises to the cytoplasm. It is found in the membrane. The enzyme catalyses L-seryl-[protein] + ATP = O-phospho-L-seryl-[protein] + ADP + H(+). It carries out the reaction L-threonyl-[protein] + ATP = O-phospho-L-threonyl-[protein] + ADP + H(+). The catalysed reaction is L-tyrosyl-[protein] + ATP = O-phospho-L-tyrosyl-[protein] + ADP + H(+). Catalyzes the concomitant phosphorylation of a threonine and a tyrosine residue in a Thr-Glu-Tyr sequence located in MAP kinases. Activates the ERK1 and ERK2 MAP kinases. Activates BRAF in a KSR1 or KSR2-dependent manner; by binding to KSR1 or KSR2 releases the inhibitory intramolecular interaction between KSR1 or KSR2 protein kinase and N-terminal domains which promotes KSR1 or KSR2-BRAF dimerization and BRAF activation. This is Dual specificity mitogen-activated protein kinase kinase 2 (MAP2K2) from Homo sapiens (Human).